Here is a 478-residue protein sequence, read N- to C-terminus: Ribosomal RNA small subunit methyltransferase F (478 aa).

S-adenosyl-L-methionine-binding positions include 121 to 127, E145, D172, and D190; that span reads ASAPGSK. C243 functions as the Nucleophile in the catalytic mechanism.

This sequence belongs to the class I-like SAM-binding methyltransferase superfamily. RsmB/NOP family.

It is found in the cytoplasm. The catalysed reaction is cytidine(1407) in 16S rRNA + S-adenosyl-L-methionine = 5-methylcytidine(1407) in 16S rRNA + S-adenosyl-L-homocysteine + H(+). In terms of biological role, specifically methylates the cytosine at position 1407 (m5C1407) of 16S rRNA. This is Ribosomal RNA small subunit methyltransferase F from Shewanella woodyi (strain ATCC 51908 / MS32).